A 660-amino-acid chain; its full sequence is Poly [ADP-ribose] polymerase 2-A (660 aa).

The SAP 1 domain occupies 2 to 36; it reads SARLRVEELRAELQRRGLDASGNKPVLVRRLDAAI. The disordered stretch occupies residues 40 to 92; sequence EEEEAAVSAAAKEEADAGGVVDGEGNGEDKRKRKRRGDGEDVDNSESDAAKLE. Positions 69-75 match the Nuclear localization signal motif; it reads KRKRKRR. Residues 91-125 enclose the SAP 2 domain; that stretch reads LEGMSYRELQALAKSRGLAANGSKKEVIERLLCAP. A WGR domain is found at 179–281; sequence TYHVLQVWFL…KSFECYARKY (103 aa). Positions 308 to 426 constitute a PARP alpha-helical domain; that stretch reads ETKLETRIAS…EIEIATKLLE (119 aa). Residues 434–660 enclose the PARP catalytic domain; it reads DPLYARYKQL…LHVSFNFKKR (227 aa).

It belongs to the ARTD/PARP family.

The protein resides in the nucleus. It catalyses the reaction NAD(+) + (ADP-D-ribosyl)n-acceptor = nicotinamide + (ADP-D-ribosyl)n+1-acceptor + H(+).. It carries out the reaction L-aspartyl-[protein] + NAD(+) = 4-O-(ADP-D-ribosyl)-L-aspartyl-[protein] + nicotinamide. The enzyme catalyses L-glutamyl-[protein] + NAD(+) = 5-O-(ADP-D-ribosyl)-L-glutamyl-[protein] + nicotinamide. In terms of biological role, involved in the base excision repair (BER) pathway, by catalyzing the poly(ADP-ribosyl)ation of a limited number of acceptor proteins involved in chromatin architecture and in DNA metabolism. This modification follows DNA damages and appears as an obligatory step in a detection/signaling pathway leading to the reparation of DNA strand breaks. The chain is Poly [ADP-ribose] polymerase 2-A (PARP2-A) from Oryza sativa subsp. japonica (Rice).